The following is a 571-amino-acid chain: Proline--tRNA ligase (571 aa).

Belongs to the class-II aminoacyl-tRNA synthetase family. ProS type 1 subfamily. In terms of assembly, homodimer.

It is found in the cytoplasm. The enzyme catalyses tRNA(Pro) + L-proline + ATP = L-prolyl-tRNA(Pro) + AMP + diphosphate. Its function is as follows. Catalyzes the attachment of proline to tRNA(Pro) in a two-step reaction: proline is first activated by ATP to form Pro-AMP and then transferred to the acceptor end of tRNA(Pro). As ProRS can inadvertently accommodate and process non-cognate amino acids such as alanine and cysteine, to avoid such errors it has two additional distinct editing activities against alanine. One activity is designated as 'pretransfer' editing and involves the tRNA(Pro)-independent hydrolysis of activated Ala-AMP. The other activity is designated 'posttransfer' editing and involves deacylation of mischarged Ala-tRNA(Pro). The misacylated Cys-tRNA(Pro) is not edited by ProRS. This is Proline--tRNA ligase from Vibrio atlanticus (strain LGP32) (Vibrio splendidus (strain Mel32)).